Reading from the N-terminus, the 331-residue chain is Beta-ketoacyl-[acyl-carrier-protein] synthase III (331 aa).

Catalysis depends on residues cysteine 115 and histidine 255. The segment at 256–260 (QANFR) is ACP-binding. The active site involves asparagine 285.

It belongs to the thiolase-like superfamily. FabH family. As to quaternary structure, homodimer.

Its subcellular location is the cytoplasm. The enzyme catalyses malonyl-[ACP] + acetyl-CoA + H(+) = 3-oxobutanoyl-[ACP] + CO2 + CoA. Its pathway is lipid metabolism; fatty acid biosynthesis. Functionally, catalyzes the condensation reaction of fatty acid synthesis by the addition to an acyl acceptor of two carbons from malonyl-ACP. Catalyzes the first condensation reaction which initiates fatty acid synthesis and may therefore play a role in governing the total rate of fatty acid production. Possesses both acetoacetyl-ACP synthase and acetyl transacylase activities. Its substrate specificity determines the biosynthesis of branched-chain and/or straight-chain of fatty acids. The chain is Beta-ketoacyl-[acyl-carrier-protein] synthase III from Helicobacter pylori (strain ATCC 700392 / 26695) (Campylobacter pylori).